The sequence spans 977 residues: Serine/threonine-protein kinase/endoribonuclease IRE1 (977 aa).

The signal sequence occupies residues 1 to 20; the sequence is MPARWLLLLLALLLPPPGPG. The Lumenal segment spans residues 21-445; sequence SFGRTSTVTL…EAPVDSMLKD (425 aa). Residue asparagine 178 is glycosylated (N-linked (GlcNAc...) asparagine). A helical membrane pass occupies residues 446 to 466; that stretch reads MATIILSTFLLVGWVAFIITY. The Cytoplasmic portion of the chain corresponds to 467 to 977; the sequence is PLSVHQQRQL…PQPPVIPYAL (511 aa). The tract at residues 498–559 is disordered; sequence FHPHGDLTQD…PSLEQDDEDE (62 aa). A compositionally biased stretch (low complexity) spans 513 to 551; it reads SSGPFSESSGTSSPSPSPRASNHSLHPSSSASRAGTSPS. The Protein kinase domain occupies 571 to 832; that stretch reads FCPKDVLGHG…AKHVLKHPFF (262 aa). ATP contacts are provided by residues 577 to 585, lysine 599, and 643 to 645; these read LGHGAEGTI and ELC. The Proton acceptor; for protein kinase activity role is filled by aspartate 688. ATP-binding positions include 690–693 and aspartate 711; that span reads KPHN. Phosphoserine is present on residues serine 724 and serine 729. The KEN domain maps to 835–963; the sequence is LEKQLQFFQD…ERLFQTYYWH (129 aa). The interval 906–907 is interacts with hydroxy-aryl-aldehyde inhibitors; sequence NK.

This sequence belongs to the protein kinase superfamily. Ser/Thr protein kinase family. In terms of assembly, monomer. Homodimer; disulfide-linked; homodimerization takes place in response to endoplasmic reticulum stress and promotes activation of the kinase and endoribonuclease activities. Dimer formation is driven by hydrophobic interactions within the N-terminal luminal domains and stabilized by disulfide bridges. Interacts (via the luminal region) with DNAJB9/ERdj4; interaction takes place in unstressed cells and promotes recruitment of HSPA5/BiP. Interacts (via the luminal region) with HSPA5/BiP; HSPA5/BiP is a negative regulator of the unfolded protein response (UPR) that prevents homodimerization of ERN1/IRE1 and subsequent activation of the protein. Interaction with HSPA5 also competitively inhibits ERN1 interaction with MANF. Interacts with PDIA6, a negative regulator of the UPR; the interaction is direct and disrupts homodimerization. Interacts with DAB2IP (via PH domain); the interaction occurs in a endoplasmic reticulum stress-induced dependent manner and is required for subsequent recruitment of TRAF2 to ERN1/IRE1. Interacts with TAOK3 and TRAF2. Interacts with RNF13. Interacts with LACC1. Interacts (when unphosphorylated) with DDRGK1; interaction is dependent on UFM1 and takes place in response to endoplasmic reticulum stress, regulating ERN1/IRE1-alpha stability. Interacts (via N-terminus) with P4HB/PDIA1; the interaction is enhanced by phosphorylation of P4HB by FAM20C in response to endoplasmic reticulum stress and results in attenuation of ERN1 activity. Interacts with TMBIM6; this interaction inhibits ERN1 activity. Interacts (via luminal domain) with MANF (via C-terminus); the interaction is decreased in the presence of increasing concentrations of Ca(2+). Mg(2+) serves as cofactor. Autophosphorylated following homodimerization. Autophosphorylation promotes activation of the endoribonuclease domain. In response to ER stress, phosphorylated at Ser-724, Ser-729 and possibly Ser-726; phosphorylation promotes oligomerization and endoribonuclease activity. Dephosphorylated at Ser-724, Ser-729 and possibly Ser-726 by RPAP2 to abort failed ER-stress adaptation and trigger apoptosis. Phosphorylated at Ser-724; in response to the ER stressor tunicamycin. In terms of processing, ADP-ribosylated by PARP16 upon ER stress, which increases both kinase and endonuclease activities. In terms of tissue distribution, expressed in liver (at protein level). Ubiquitously expressed. High levels in thymus, liver and lung. In the brain, preferentially expressed in cortical, hippocampal and olfactory neurons.

It localises to the endoplasmic reticulum membrane. The enzyme catalyses L-seryl-[protein] + ATP = O-phospho-L-seryl-[protein] + ADP + H(+). It carries out the reaction L-threonyl-[protein] + ATP = O-phospho-L-threonyl-[protein] + ADP + H(+). Its activity is regulated as follows. The kinase domain is activated by trans-autophosphorylation following homodimerization. Kinase activity is required for activation of the endoribonuclease domain. Endoribonuclease activity is specifically inhibited by hydroxy-aryl-aldehydes (HAA) MKC9989, OICR464 and OICR573. Serine/threonine-protein kinase and endoribonuclease that acts as a key sensor for the endoplasmic reticulum unfolded protein response (UPR). In unstressed cells, the endoplasmic reticulum luminal domain is maintained in its inactive monomeric state by binding to the endoplasmic reticulum chaperone HSPA5/BiP. Accumulation of misfolded protein in the endoplasmic reticulum causes release of HSPA5/BiP, allowing the luminal domain to homodimerize, promoting autophosphorylation of the kinase domain and subsequent activation of the endoribonuclease activity. The endoribonuclease activity is specific for XBP1 mRNA and excises 26 nucleotides from XBP1 mRNA. The resulting spliced transcript of XBP1 encodes a transcriptional activator protein that up-regulates expression of UPR target genes. Acts as an upstream signal for ER stress-induced GORASP2-mediated unconventional (ER/Golgi-independent) trafficking of CFTR to cell membrane by modulating the expression and localization of SEC16A. The sequence is that of Serine/threonine-protein kinase/endoribonuclease IRE1 from Mus musculus (Mouse).